The primary structure comprises 226 residues: Cytidylate kinase (226 aa).

Position 10-18 (10-18 (GPAGAGKST)) interacts with ATP.

This sequence belongs to the cytidylate kinase family. Type 1 subfamily.

The protein localises to the cytoplasm. The catalysed reaction is CMP + ATP = CDP + ADP. It carries out the reaction dCMP + ATP = dCDP + ADP. The protein is Cytidylate kinase of Caldicellulosiruptor saccharolyticus (strain ATCC 43494 / DSM 8903 / Tp8T 6331).